Reading from the N-terminus, the 155-residue chain is 6,7-dimethyl-8-ribityllumazine synthase (155 aa).

5-amino-6-(D-ribitylamino)uracil contacts are provided by residues Phe24, 58–60, and 82–84; these read AFE and AII. Residue 87 to 88 participates in (2S)-2-hydroxy-3-oxobutyl phosphate binding; sequence ST. His90 (proton donor) is an active-site residue. Phe115 is a binding site for 5-amino-6-(D-ribitylamino)uracil. Arg129 contacts (2S)-2-hydroxy-3-oxobutyl phosphate.

It belongs to the DMRL synthase family.

It catalyses the reaction (2S)-2-hydroxy-3-oxobutyl phosphate + 5-amino-6-(D-ribitylamino)uracil = 6,7-dimethyl-8-(1-D-ribityl)lumazine + phosphate + 2 H2O + H(+). It participates in cofactor biosynthesis; riboflavin biosynthesis; riboflavin from 2-hydroxy-3-oxobutyl phosphate and 5-amino-6-(D-ribitylamino)uracil: step 1/2. Catalyzes the formation of 6,7-dimethyl-8-ribityllumazine by condensation of 5-amino-6-(D-ribitylamino)uracil with 3,4-dihydroxy-2-butanone 4-phosphate. This is the penultimate step in the biosynthesis of riboflavin. The sequence is that of 6,7-dimethyl-8-ribityllumazine synthase from Chlorobium phaeovibrioides (strain DSM 265 / 1930) (Prosthecochloris vibrioformis (strain DSM 265)).